The primary structure comprises 761 residues: Proton-coupled zinc antiporter SLC30A5 (761 aa).

Met1 is subject to N-acetylmethionine. The Cytoplasmic segment spans residues 1–29 (MEEKYGGDARPGPGGGLGPVDVPSARLTR). The helical transmembrane segment at 30-46 (YILLLCLTKCLKAVGLF) threads the bilayer. Topologically, residues 47–54 (ESYDLLKA) are lumenal. Residues 55-75 (VHIVQFIFILKLGTAFFMVLF) traverse the membrane as a helical segment. The Cytoplasmic portion of the chain corresponds to 76–96 (QKPFSSGKPITKHQWIKIFKH). The helical transmembrane segment at 97–117 (AVAGCIISLLWFFGLTLCGPL) threads the bilayer. A topological domain (lumenal) is located at residue Arg118. The chain crosses the membrane as a helical span at residues 119-139 (TLLLFEHSDIVVISLLSVLFT). The Cytoplasmic portion of the chain corresponds to 140–150 (SSGGGPAKTRG). Residues 151-171 (AAFFIIAVICLLLFDNDDLMA) traverse the membrane as a helical segment. Over 172–191 (KMAEHPEGHHDSALTHMLYT) the chain is Lumenal. Residues 192-212 (AIAFLGVADHKGGVLLLVLAL) traverse the membrane as a helical segment. The Cytoplasmic segment spans residues 213–236 (CCKVGFHTASRKLSIDVGGAKRLQ). The helical transmembrane segment at 237 to 257 (ALSQLVSVFLLCPWVIVLSVT) threads the bilayer. At 258-264 (TESKVES) the chain is on the lumenal side. The helical transmembrane segment at 265–285 (WFSLIMPFTTVIFFVMILDFY) threads the bilayer. Residues 286–301 (MDSVCSVKMDVSKCAR) lie on the Cytoplasmic side of the membrane. A helical transmembrane segment spans residues 302 to 322 (YGSFPIFISALLFGNFWTHPI). Over 323-340 (TDQLRAMNRAAHQESTEH) the chain is Lumenal. A helical transmembrane segment spans residues 341–361 (VLSGGVVVSAVFFILSANILS). Topologically, residues 362–416 (SPSKRGQKGTLIGYSPEGTPLYHFMGDAFQHSSQSVPRFIKDSLKQVLEESDSRQ) are cytoplasmic. A helical membrane pass occupies residues 417-437 (IFYFLCLNLLFTFVELFYGVL). Positions 418–636 (FYFLCLNLLF…VLIFLSVIPL (219 aa)) are mediates homodimerization with SLC30A6. Residues 438–446 (TNSLGLISD) lie on the Lumenal side of the membrane. A helical transmembrane segment spans residues 447 to 467 (GFHMLFDCSALVMGLFAALMS). Residues His449 and Asp453 each contribute to the Zn(2+) site. The Cytoplasmic segment spans residues 468–481 (RWKATRIFSYGYGR). Residues 482 to 502 (IEILSGFINGLFLIVIAFFVF) form a helical membrane-spanning segment. Residues 503-518 (MESVARLIDPPELDTN) are Lumenal-facing. Residues 519 to 539 (MLTPVSVGGLIVNLIGICAFS) form a helical membrane-spanning segment. Residues 540 to 574 (HAHSHGHGASQGNCHSDHGHSHHAHGHGHDHGHSH) form a his-rich loop; required for zinc transport region. The Cytoplasmic portion of the chain corresponds to 540–588 (HAHSHGHGASQGNCHSDHGHSHHAHGHGHDHGHSHGFTGGGMNANMRGV). The interval 549 to 576 (SQGNCHSDHGHSHHAHGHGHDHGHSHGF) is disordered. Residues 589-609 (FLHVLADTLGSIGVIVSTVLI) form a helical membrane-spanning segment. Residues His591 and Asp595 each contribute to the Zn(2+) site. Topologically, residues 610–613 (EQFG) are lumenal. The chain crosses the membrane as a helical span at residues 614–634 (WFIADPLCSLFIAVLIFLSVI). Over 635-761 (PLIKDACQVL…KYCKDGTYIM (127 aa)) the chain is Cytoplasmic.

This sequence belongs to the cation diffusion facilitator (CDF) transporter (TC 2.A.4) family. SLC30A subfamily. Heterodimer with SLC30A6/ZNT6; form a functional zinc ion transmembrane transporter. Post-translationally, could homodimerize through the formation of dityrosine bonds upon oxidative stress. Ubiquitously expressed.

Its subcellular location is the golgi apparatus. It is found in the golgi stack membrane. It localises to the cytoplasmic vesicle. The protein localises to the COPII-coated vesicle membrane. The protein resides in the secretory vesicle membrane. Its subcellular location is the trans-Golgi network membrane. It catalyses the reaction Zn(2+)(in) + 2 H(+)(out) = Zn(2+)(out) + 2 H(+)(in). Functionally, together with SLC30A6 forms a functional proton-coupled zinc ion antiporter mediating zinc entry into the lumen of organelles along the secretory pathway. By contributing to zinc ion homeostasis within the early secretory pathway, regulates the activation and folding of enzymes like alkaline phosphatases and enzymes involved in phosphatidylinositol glycan anchor biosynthesis. Through the transport of zinc into secretory granules of pancreatic beta-cells, plays an important role in the storage and secretion of insulin. The chain is Proton-coupled zinc antiporter SLC30A5 from Mus musculus (Mouse).